A 325-amino-acid chain; its full sequence is Bifunctional nuclease 2 (325 aa).

Positions 119–254 (CVHNNSQGRN…SLAYSDGIRS (136 aa)) constitute a BFN domain. One can recognise a UVR domain in the interval 285–320 (EAQEFGLIRNMLIAAVEERYKDAATWRDKLMLLRSK).

Belongs to the bifunctional nuclease family.

Its subcellular location is the nucleus. Its function is as follows. Bifunctional nuclease with both RNase and DNase activities. Involved in basal defense response. Participates in abscisic acid-derived callose deposition following infection by a necrotrophic pathogen. The polypeptide is Bifunctional nuclease 2 (BBD2) (Oryza sativa subsp. japonica (Rice)).